The sequence spans 35 residues: Anti-H(O) lectin 3 (35 aa).

Belongs to the leguminous lectin family. As to quaternary structure, homodimer. In terms of processing, highly glycosylated.

Its function is as follows. Binds lactose or galactose. The chain is Anti-H(O) lectin 3 from Ulex europaeus (Furze).